Consider the following 438-residue polypeptide: MEYFKNVPQIKYEGPKSNNPYAFKFYNPDEIIDGKPLKEHLRFSVAYWHTFTANGTDPFGAPTMQRPWDHFTDPMDIAKARVEAAFELFEKLDVPFFCFHDRDIAPEGETLRETNKNLDTIVAMIKDYLKTSKTKVLWGTANLFSNPRFVHGAATSCNADVFAYAAAQVKKALEITKELGGQNYVFWGGREGYETLLNTDMELELDNLARFLHMAVEYAQEIGFEGQFLIEPKPKEPTKHQYDFDAASVHAFLKKYDLDKYFKLNIEANHATLAGHDFQHELRYARINNILGSIDANMGDMLLGWDTDQYPTDIRMTTLAMYEVIKMGGFNKGGLNFDAKVRRASFEPEDLFLGHIAGMDAFAKGFKVAYKLVKDGVFDRFIEERYKSYREGIGAEIVSGKANFKTLEEYALNNPKIENKSGKQELLESILNQYLFSE.

Catalysis depends on residues His100 and Asp103. Mg(2+)-binding residues include Glu231, Glu267, His270, Asp295, Asp306, Asp308, and Asp338.

The protein belongs to the xylose isomerase family. As to quaternary structure, homotetramer. It depends on Mg(2+) as a cofactor.

It is found in the cytoplasm. It catalyses the reaction alpha-D-xylose = alpha-D-xylulofuranose. In Thermoanaerobacter sp. (strain X514), this protein is Xylose isomerase.